A 156-amino-acid chain; its full sequence is Ribosome-binding factor A (156 aa).

Positions 124 to 156 are disordered; the sequence is TRAEYAGEAQPYRLEEEPEGSGDEVPPPGGDQR.

The protein belongs to the RbfA family. Monomer. Binds 30S ribosomal subunits, but not 50S ribosomal subunits or 70S ribosomes.

It localises to the cytoplasm. Its function is as follows. One of several proteins that assist in the late maturation steps of the functional core of the 30S ribosomal subunit. Associates with free 30S ribosomal subunits (but not with 30S subunits that are part of 70S ribosomes or polysomes). Required for efficient processing of 16S rRNA. May interact with the 5'-terminal helix region of 16S rRNA. In Salinispora tropica (strain ATCC BAA-916 / DSM 44818 / JCM 13857 / NBRC 105044 / CNB-440), this protein is Ribosome-binding factor A.